The primary structure comprises 470 residues: Na(+)/H(+) antiporter NhaA 2 (470 aa).

11 helical membrane passes run 34-54 (FLHI…IALL), 85-105 (LEWV…GMEI), 121-141 (ALPA…YLLL), 150-170 (GWGV…TLLG), 179-199 (VLLL…IAVF), 202-222 (SGVA…VFAM), 241-261 (WAGV…IGLI), 317-337 (SLIA…FALA), 357-377 (LATA…ACWL), 395-415 (LLVL…IAQL), and 423-443 (LAAG…VALV).

The protein belongs to the NhaA Na(+)/H(+) (TC 2.A.33) antiporter family.

It localises to the cell inner membrane. It carries out the reaction Na(+)(in) + 2 H(+)(out) = Na(+)(out) + 2 H(+)(in). Na(+)/H(+) antiporter that extrudes sodium in exchange for external protons. The polypeptide is Na(+)/H(+) antiporter NhaA 2 (Myxococcus xanthus (strain DK1622)).